The primary structure comprises 158 residues: Transcription elongation factor GreA (158 aa).

The protein belongs to the GreA/GreB family.

In terms of biological role, necessary for efficient RNA polymerase transcription elongation past template-encoded arresting sites. The arresting sites in DNA have the property of trapping a certain fraction of elongating RNA polymerases that pass through, resulting in locked ternary complexes. Cleavage of the nascent transcript by cleavage factors such as GreA or GreB allows the resumption of elongation from the new 3'terminus. GreA releases sequences of 2 to 3 nucleotides. This chain is Transcription elongation factor GreA, found in Allorhizobium ampelinum (strain ATCC BAA-846 / DSM 112012 / S4) (Agrobacterium vitis (strain S4)).